Here is a 69-residue protein sequence, read N- to C-terminus: Probable Sec-independent protein translocase protein TatE (69 aa).

Residues 1 to 21 form a helical membrane-spanning segment; the sequence is MEGISIAKLLVIGALIVLLFG. The interval 45–69 is disordered; it reads DDQPAAKSSAQDEHPAAISETRPKE. Positions 54–69 are enriched in basic and acidic residues; it reads AQDEHPAAISETRPKE.

It belongs to the TatA/E family. TatE subfamily.

It is found in the cell inner membrane. In terms of biological role, part of the twin-arginine translocation (Tat) system that transports large folded proteins containing a characteristic twin-arginine motif in their signal peptide across membranes. TatE shares overlapping functions with TatA. The polypeptide is Probable Sec-independent protein translocase protein TatE (Dickeya chrysanthemi (strain Ech1591) (Dickeya zeae (strain Ech1591))).